The primary structure comprises 423 residues: D-tagatose-1,6-bisphosphate aldolase subunit GatZ (423 aa).

The protein belongs to the GatZ/KbaZ family. GatZ subfamily. Forms a complex with GatY.

It functions in the pathway carbohydrate metabolism; D-tagatose 6-phosphate degradation; D-glyceraldehyde 3-phosphate and glycerone phosphate from D-tagatose 6-phosphate: step 2/2. Component of the tagatose-1,6-bisphosphate aldolase GatYZ that is required for full activity and stability of the Y subunit. Could have a chaperone-like function for the proper and stable folding of GatY. When expressed alone, GatZ does not show any aldolase activity. Is involved in the catabolism of galactitol. The protein is D-tagatose-1,6-bisphosphate aldolase subunit GatZ of Klebsiella pneumoniae subsp. pneumoniae (strain ATCC 700721 / MGH 78578).